A 204-amino-acid chain; its full sequence is dITP/XTP pyrophosphatase (204 aa).

Residue 8–13 participates in substrate binding; it reads SRNRKK. Asp73 (proton acceptor) is an active-site residue. Mg(2+) is bound at residue Asp73. Residues Ser74, 155 to 158, Lys179, and 184 to 185 contribute to the substrate site; these read FGYD and HR.

It belongs to the HAM1 NTPase family. As to quaternary structure, homodimer. It depends on Mg(2+) as a cofactor.

It carries out the reaction XTP + H2O = XMP + diphosphate + H(+). The enzyme catalyses dITP + H2O = dIMP + diphosphate + H(+). The catalysed reaction is ITP + H2O = IMP + diphosphate + H(+). Functionally, pyrophosphatase that catalyzes the hydrolysis of nucleoside triphosphates to their monophosphate derivatives, with a high preference for the non-canonical purine nucleotides XTP (xanthosine triphosphate), dITP (deoxyinosine triphosphate) and ITP. Seems to function as a house-cleaning enzyme that removes non-canonical purine nucleotides from the nucleotide pool, thus preventing their incorporation into DNA/RNA and avoiding chromosomal lesions. The sequence is that of dITP/XTP pyrophosphatase from Mycolicibacterium paratuberculosis (strain ATCC BAA-968 / K-10) (Mycobacterium paratuberculosis).